A 1034-amino-acid polypeptide reads, in one-letter code: Glycine dehydrogenase (decarboxylating), mitochondrial (1034 aa).

The transit peptide at methionine 1–threonine 63 directs the protein to the mitochondrion. N6-(pyridoxal phosphate)lysine is present on lysine 770.

It belongs to the GcvP family. Homodimer. The glycine cleavage system is composed of four proteins: P, T, L and H. It depends on pyridoxal 5'-phosphate as a cofactor.

It is found in the mitochondrion. It carries out the reaction N(6)-[(R)-lipoyl]-L-lysyl-[glycine-cleavage complex H protein] + glycine + H(+) = N(6)-[(R)-S(8)-aminomethyldihydrolipoyl]-L-lysyl-[glycine-cleavage complex H protein] + CO2. In terms of biological role, the glycine cleavage system catalyzes the degradation of glycine. The P protein binds the alpha-amino group of glycine through its pyridoxal phosphate cofactor; CO(2) is released and the remaining methylamine moiety is then transferred to the lipoamide cofactor of the H protein. This is Glycine dehydrogenase (decarboxylating), mitochondrial (GDCSPA) from Flaveria trinervia (Clustered yellowtops).